A 402-amino-acid polypeptide reads, in one-letter code: 1-deoxy-D-xylulose 5-phosphate reductoisomerase (402 aa).

NADPH-binding residues include threonine 10, glycine 11, serine 12, isoleucine 13, asparagine 38, and asparagine 124. 1-deoxy-D-xylulose 5-phosphate is bound at residue lysine 125. Glutamate 126 is a binding site for NADPH. Aspartate 150 lines the Mn(2+) pocket. 4 residues coordinate 1-deoxy-D-xylulose 5-phosphate: serine 151, glutamate 152, serine 186, and histidine 209. Glutamate 152 serves as a coordination point for Mn(2+). Glycine 215 lines the NADPH pocket. 1-deoxy-D-xylulose 5-phosphate is bound by residues serine 222, asparagine 227, lysine 228, and glutamate 231. Glutamate 231 contributes to the Mn(2+) binding site.

This sequence belongs to the DXR family. Requires Mg(2+) as cofactor. Mn(2+) serves as cofactor.

It catalyses the reaction 2-C-methyl-D-erythritol 4-phosphate + NADP(+) = 1-deoxy-D-xylulose 5-phosphate + NADPH + H(+). It participates in isoprenoid biosynthesis; isopentenyl diphosphate biosynthesis via DXP pathway; isopentenyl diphosphate from 1-deoxy-D-xylulose 5-phosphate: step 1/6. In terms of biological role, catalyzes the NADPH-dependent rearrangement and reduction of 1-deoxy-D-xylulose-5-phosphate (DXP) to 2-C-methyl-D-erythritol 4-phosphate (MEP). In Vibrio vulnificus (strain CMCP6), this protein is 1-deoxy-D-xylulose 5-phosphate reductoisomerase.